Reading from the N-terminus, the 217-residue chain is Uracil-DNA glycosylase (217 aa).

Asp-62 functions as the Proton acceptor in the catalytic mechanism.

This sequence belongs to the uracil-DNA glycosylase (UDG) superfamily. UNG family.

Its subcellular location is the cytoplasm. It catalyses the reaction Hydrolyzes single-stranded DNA or mismatched double-stranded DNA and polynucleotides, releasing free uracil.. Excises uracil residues from the DNA which can arise as a result of misincorporation of dUMP residues by DNA polymerase or due to deamination of cytosine. The protein is Uracil-DNA glycosylase of Streptococcus pyogenes serotype M18 (strain MGAS8232).